Reading from the N-terminus, the 361-residue chain is Chorismate synthase (361 aa).

Arg48 contacts NADP(+). Residues 125–127 (RSS), 238–239 (NA), Gly278, 293–297 (KPTSS), and Arg319 contribute to the FMN site.

Belongs to the chorismate synthase family. In terms of assembly, homotetramer. FMNH2 serves as cofactor.

The enzyme catalyses 5-O-(1-carboxyvinyl)-3-phosphoshikimate = chorismate + phosphate. Its pathway is metabolic intermediate biosynthesis; chorismate biosynthesis; chorismate from D-erythrose 4-phosphate and phosphoenolpyruvate: step 7/7. Its function is as follows. Catalyzes the anti-1,4-elimination of the C-3 phosphate and the C-6 proR hydrogen from 5-enolpyruvylshikimate-3-phosphate (EPSP) to yield chorismate, which is the branch point compound that serves as the starting substrate for the three terminal pathways of aromatic amino acid biosynthesis. This reaction introduces a second double bond into the aromatic ring system. The protein is Chorismate synthase of Aliivibrio fischeri (strain ATCC 700601 / ES114) (Vibrio fischeri).